A 660-amino-acid chain; its full sequence is GRIP and coiled-coil domain-containing protein 2 (660 aa).

The disordered stretch occupies residues 1–28 (MSAPESSISPVPPPGSSSGGGKKLDSLP). 3 coiled-coil regions span residues 30–92 (EDLV…VENN), 115–464 (EWKE…KAIA), and 517–596 (DEYR…EYLK). Residues 585 to 636 (ELSNEKNMEYLKNVFVQFLKPESVPAERDQLVIVLQRVLHLSPKEVEILKAA) enclose the GRIP domain.

This chain is GRIP and coiled-coil domain-containing protein 2, found in Caenorhabditis elegans.